Here is a 156-residue protein sequence, read N- to C-terminus: Oxidized purine nucleoside triphosphate hydrolase (156 aa).

The region spanning 3–132 is the Nudix hydrolase domain; the sequence is TSRLYTLVLV…WFPLLLQKKK (130 aa). Residue threonine 8 participates in 2-oxo-dATP binding. Lysine 23 lines the 8-oxo-dGTP pocket. 2-oxo-dATP-binding positions include asparagine 33 and 35–38; that span reads FGGK. Mg(2+) contacts are provided by glycine 36, glutamate 52, glutamate 55, glutamate 56, and glutamate 100. A Nudix box motif is present at residues 37–58; the sequence is GKVQEGETIEDGAKRELREESG. 117–120 contributes to the 2-oxo-dATP binding site; the sequence is WPDD.

This sequence belongs to the Nudix hydrolase family. As to quaternary structure, monomer. Mg(2+) serves as cofactor.

It is found in the cytoplasm. It localises to the nucleus. The protein resides in the nucleus membrane. Its subcellular location is the cytoplasmic vesicle. The protein localises to the secretory vesicle. It is found in the acrosome. It catalyses the reaction 2-oxo-dATP + H2O = 2-oxo-dAMP + diphosphate + H(+). The enzyme catalyses 2-oxo-ATP + H2O = 2-oxo-AMP + diphosphate + H(+). The catalysed reaction is 8-oxo-dGTP + H2O = 8-oxo-dGMP + diphosphate + H(+). It carries out the reaction 8-oxo-dATP + H2O = 8-oxo-dAMP + diphosphate + H(+). It catalyses the reaction O(6)-methyl-dGTP + H2O = O(6)-methyl-dGMP + diphosphate + H(+). The enzyme catalyses N(6)-methyl-dATP + H2O = N(6)-methyl-dAMP + diphosphate + H(+). The catalysed reaction is N(6)-methyl-ATP + H2O = N(6)-methyl-AMP + diphosphate + H(+). Its function is as follows. Oxidized purine nucleoside triphosphate hydrolase which is a prominent sanitizer of the oxidized nucleotide pool. Catalyzes the hydrolysis of 2-oxo-dATP (2-hydroxy-dATP) into 2-oxo-dAMP. Also has a significant hydrolase activity toward 2-oxo-ATP, 8-oxo-dGTP and 8-oxo-dATP. Through the hydrolysis of oxidized purine nucleoside triphosphates, prevents their incorporation into DNA and the subsequent transversions A:T to C:G and G:C to T:A. Also catalyzes the hydrolysis of methylated purine nucleoside triphosphate preventing their integration into DNA. Through this antimutagenic activity protects cells from oxidative stress. The sequence is that of Oxidized purine nucleoside triphosphate hydrolase (NUDT1) from Canis lupus familiaris (Dog).